The sequence spans 362 residues: Phosphoserine aminotransferase (362 aa).

L-glutamate-binding residues include Ser-9 and Arg-42. Residues 76–77, Trp-102, Thr-153, Asp-174, and Gln-197 each bind pyridoxal 5'-phosphate; that span reads GR. Position 198 is an N6-(pyridoxal phosphate)lysine (Lys-198). Pyridoxal 5'-phosphate is bound at residue 239-240; that stretch reads NT.

This sequence belongs to the class-V pyridoxal-phosphate-dependent aminotransferase family. SerC subfamily. Homodimer. The cofactor is pyridoxal 5'-phosphate.

The protein resides in the cytoplasm. It carries out the reaction O-phospho-L-serine + 2-oxoglutarate = 3-phosphooxypyruvate + L-glutamate. It catalyses the reaction 4-(phosphooxy)-L-threonine + 2-oxoglutarate = (R)-3-hydroxy-2-oxo-4-phosphooxybutanoate + L-glutamate. It participates in amino-acid biosynthesis; L-serine biosynthesis; L-serine from 3-phospho-D-glycerate: step 2/3. It functions in the pathway cofactor biosynthesis; pyridoxine 5'-phosphate biosynthesis; pyridoxine 5'-phosphate from D-erythrose 4-phosphate: step 3/5. Its function is as follows. Catalyzes the reversible conversion of 3-phosphohydroxypyruvate to phosphoserine and of 3-hydroxy-2-oxo-4-phosphonooxybutanoate to phosphohydroxythreonine. This Klebsiella pneumoniae subsp. pneumoniae (strain ATCC 700721 / MGH 78578) protein is Phosphoserine aminotransferase.